The primary structure comprises 313 residues: Ribosomal RNA small subunit methyltransferase H (313 aa).

Residues 35–37 (GGH), Asp-55, Phe-79, Asp-101, and Gln-108 each bind S-adenosyl-L-methionine.

Belongs to the methyltransferase superfamily. RsmH family.

The protein resides in the cytoplasm. The enzyme catalyses cytidine(1402) in 16S rRNA + S-adenosyl-L-methionine = N(4)-methylcytidine(1402) in 16S rRNA + S-adenosyl-L-homocysteine + H(+). Functionally, specifically methylates the N4 position of cytidine in position 1402 (C1402) of 16S rRNA. This chain is Ribosomal RNA small subunit methyltransferase H, found in Klebsiella pneumoniae subsp. pneumoniae (strain ATCC 700721 / MGH 78578).